Here is a 306-residue protein sequence, read N- to C-terminus: Small ribosomal subunit protein uS2 (306 aa).

The tract at residues 257–306 is disordered; sequence EGDKKDETAAAAEVQTSAETEKVADAEKPAEAVAEAEAEAPAADADAEQA. Over residues 275–286 the composition is skewed to basic and acidic residues; it reads ETEKVADAEKPA. The segment covering 287 to 300 has biased composition (low complexity); sequence EAVAEAEAEAPAAD.

Belongs to the universal ribosomal protein uS2 family.

The sequence is that of Small ribosomal subunit protein uS2 from Streptomyces griseus subsp. griseus (strain JCM 4626 / CBS 651.72 / NBRC 13350 / KCC S-0626 / ISP 5235).